The primary structure comprises 382 residues: Lipid-A-disaccharide synthase (382 aa).

This sequence belongs to the LpxB family.

It carries out the reaction 2-N,3-O-bis[(3R)-3-hydroxytetradecanoyl]-alpha-D-glucosaminyl 1-phosphate + UDP-2-N,3-O-bis[(3R)-3-hydroxytetradecanoyl]-alpha-D-glucosamine = lipid A disaccharide (E. coli) + UDP + H(+). It catalyses the reaction a lipid X + a UDP-2-N,3-O-bis[(3R)-3-hydroxyacyl]-alpha-D-glucosamine = a lipid A disaccharide + UDP + H(+). It functions in the pathway glycolipid biosynthesis; lipid IV(A) biosynthesis; lipid IV(A) from (3R)-3-hydroxytetradecanoyl-[acyl-carrier-protein] and UDP-N-acetyl-alpha-D-glucosamine: step 5/6. Its function is as follows. Condensation of UDP-2,3-diacylglucosamine and 2,3-diacylglucosamine-1-phosphate to form lipid A disaccharide, a precursor of lipid A, a phosphorylated glycolipid that anchors the lipopolysaccharide to the outer membrane of the cell. The chain is Lipid-A-disaccharide synthase from Escherichia coli O127:H6 (strain E2348/69 / EPEC).